The primary structure comprises 420 residues: Histidine--tRNA ligase (420 aa).

This sequence belongs to the class-II aminoacyl-tRNA synthetase family. As to quaternary structure, homodimer.

The protein resides in the cytoplasm. The enzyme catalyses tRNA(His) + L-histidine + ATP = L-histidyl-tRNA(His) + AMP + diphosphate + H(+). In Ureaplasma parvum serovar 3 (strain ATCC 27815 / 27 / NCTC 11736), this protein is Histidine--tRNA ligase.